The chain runs to 1383 residues: Spike glycoprotein (1383 aa).

Positions 1–25 are cleaved as a signal peptide; the sequence is MRSLIYFWLLLPVLPTLSLPQDVTR. Residues 26 to 734 form an S1 region; that stretch reads CQSTTNFRRF…TRELPGFFYH (709 aa). At 26-1324 the chain is on the virion surface side; it reads CQSTTNFRRF…NRVETYIKWP (1299 aa). Residues 617–745 form an interaction with host ANPEP region; that stretch reads FQFTKGELIT…NDGSNCTEPV (129 aa). The segment at 735-1383 is S2; sequence SNDGSNCTEP…YEAFEKVHVQ (649 aa). The fusion peptide stretch occupies residues 955 to 975; it reads IGGMALGGITAAAALPFSYAV. The interval 969 to 1088 is heptad repeat 1 (HR1); that stretch reads LPFSYAVQAR…QVDRLITGRL (120 aa). Coiled coils occupy residues 1036–1080 and 1272–1314; these read QEVV…DVQV and TYLN…LEWL. The segment at 1240-1336 is heptad repeat 2 (HR2); sequence PDYIDVNKTL…VWLIIVIVLI (97 aa). The chain crosses the membrane as a helical span at residues 1325–1344; sequence WWVWLIIVIVLIFVVSLLVF. Over 1345-1383 the chain is Intravirion; it reads CCISTGCCGCCGCCGACFSGCCRGPRLQPYEAFEKVHVQ. Residues 1379-1383 carry the KxHxx motif; sequence KVHVQ.

This sequence belongs to the alphacoronaviruses spike protein family. In terms of assembly, homotrimer. During virus morphogenesis, found in a complex with M and HE proteins. Interacts with host ANPEP.

The protein localises to the virion membrane. The protein resides in the host endoplasmic reticulum-Golgi intermediate compartment membrane. S1 region attaches the virion to the cell membrane by interacting with host ANPEP/aminopeptidase N, initiating the infection. Binding to the receptor probably induces conformational changes in the S glycoprotein unmasking the fusion peptide of S2 region and activating membranes fusion. S2 region belongs to the class I viral fusion protein. Under the current model, the protein has at least 3 conformational states: pre-fusion native state, pre-hairpin intermediate state, and post-fusion hairpin state. During viral and target cell membrane fusion, the coiled coil regions (heptad repeats) regions assume a trimer-of-hairpins structure, positioning the fusion peptide in close proximity to the C-terminal region of the ectodomain. The formation of this structure appears to drive apposition and subsequent fusion of viral and target cell membranes. This chain is Spike glycoprotein, found in Porcine epidemic diarrhea virus (strain CV777) (PEDV).